A 652-amino-acid polypeptide reads, in one-letter code: DNA ligase (652 aa).

NAD(+) is bound by residues 29–33 (DSEYD), 78–79 (SL), and glutamate 107. The active-site N6-AMP-lysine intermediate is the lysine 109. Arginine 130, glutamate 164, lysine 278, and lysine 302 together coordinate NAD(+). Zn(2+)-binding residues include cysteine 395, cysteine 398, cysteine 413, and cysteine 418. The BRCT domain occupies 577–652 (VADAALSGLT…VRDEAWLESL (76 aa)).

The protein belongs to the NAD-dependent DNA ligase family. LigA subfamily. Mg(2+) is required as a cofactor. The cofactor is Mn(2+).

The catalysed reaction is NAD(+) + (deoxyribonucleotide)n-3'-hydroxyl + 5'-phospho-(deoxyribonucleotide)m = (deoxyribonucleotide)n+m + AMP + beta-nicotinamide D-nucleotide.. Functionally, DNA ligase that catalyzes the formation of phosphodiester linkages between 5'-phosphoryl and 3'-hydroxyl groups in double-stranded DNA using NAD as a coenzyme and as the energy source for the reaction. It is essential for DNA replication and repair of damaged DNA. The protein is DNA ligase of Streptococcus pneumoniae (strain P1031).